Consider the following 265-residue polypeptide: Glutamate 5-kinase (265 aa).

Lys-15 lines the ATP pocket. Residues Ser-55, Asp-142, and Asn-158 each contribute to the substrate site. Residues Ser-178–Asp-179 and Thr-220–Lys-226 each bind ATP.

The protein belongs to the glutamate 5-kinase family.

The protein localises to the cytoplasm. It catalyses the reaction L-glutamate + ATP = L-glutamyl 5-phosphate + ADP. The protein operates within amino-acid biosynthesis; L-proline biosynthesis; L-glutamate 5-semialdehyde from L-glutamate: step 1/2. Catalyzes the transfer of a phosphate group to glutamate to form L-glutamate 5-phosphate. The polypeptide is Glutamate 5-kinase (Lactiplantibacillus plantarum (strain ATCC BAA-793 / NCIMB 8826 / WCFS1) (Lactobacillus plantarum)).